The following is a 648-amino-acid chain: Macrolide export ATP-binding/permease protein MacB (648 aa).

The region spanning 5–243 (LELCNVSRSY…QGVDAAVVNT (239 aa)) is the ABC transporter domain. ATP is bound at residue 41–48 (GVSGSGKS). The next 5 membrane-spanning stretches (helical) occupy residues 273-293 (LLTM…VVVG), 417-437 (ANVV…IGVA), 523-543 (LFLT…VMNI), 577-597 (VLVC…IAFM), and 611-631 (LTAL…FGWL).

The protein belongs to the ABC transporter superfamily. Macrolide exporter (TC 3.A.1.122) family. In terms of assembly, homodimer. Part of the tripartite efflux system MacAB-TolC, which is composed of an inner membrane transporter, MacB, a periplasmic membrane fusion protein, MacA, and an outer membrane component, TolC. The complex forms a large protein conduit and can translocate molecules across both the inner and outer membranes. Interacts with MacA.

It is found in the cell inner membrane. In terms of biological role, part of the tripartite efflux system MacAB-TolC. MacB is a non-canonical ABC transporter that contains transmembrane domains (TMD), which form a pore in the inner membrane, and an ATP-binding domain (NBD), which is responsible for energy generation. Confers resistance against macrolides. This Salmonella typhi protein is Macrolide export ATP-binding/permease protein MacB.